Reading from the N-terminus, the 1110-residue chain is Isoleucine--tRNA ligase (1110 aa).

The 'HIGH' region motif lies at 47–57; the sequence is PSANGTPGIHH. The 'KMSKS' region signature appears at 658–662; sequence KMSKR. Lys661 serves as a coordination point for ATP.

It belongs to the class-I aminoacyl-tRNA synthetase family. IleS type 2 subfamily. As to quaternary structure, monomer. Requires Zn(2+) as cofactor.

It is found in the cytoplasm. It carries out the reaction tRNA(Ile) + L-isoleucine + ATP = L-isoleucyl-tRNA(Ile) + AMP + diphosphate. Functionally, catalyzes the attachment of isoleucine to tRNA(Ile). As IleRS can inadvertently accommodate and process structurally similar amino acids such as valine, to avoid such errors it has two additional distinct tRNA(Ile)-dependent editing activities. One activity is designated as 'pretransfer' editing and involves the hydrolysis of activated Val-AMP. The other activity is designated 'posttransfer' editing and involves deacylation of mischarged Val-tRNA(Ile). The sequence is that of Isoleucine--tRNA ligase from Cytophaga hutchinsonii (strain ATCC 33406 / DSM 1761 / CIP 103989 / NBRC 15051 / NCIMB 9469 / D465).